Here is a 442-residue protein sequence, read N- to C-terminus: Hydroxycinnamoyltransferase 1 (442 aa).

Active-site proton acceptor residues include histidine 159 and aspartate 389.

It belongs to the plant acyltransferase family. As to expression, expressed in roots, leaves, stems and seeds.

Functionally, hydroxycinnamoyl transferase that catalyzes the transfer of an acyl from p-coumaryol-CoA to various acyl acceptors. Can use feruloyl-CoA and caffeoyl-CoA as acyl donors. The chain is Hydroxycinnamoyltransferase 1 from Oryza sativa subsp. japonica (Rice).